The sequence spans 664 residues: UvrABC system protein C (664 aa).

One can recognise a GIY-YIG domain in the interval L63–I141. A UVR domain is found at T254–I289.

This sequence belongs to the UvrC family. As to quaternary structure, interacts with UvrB in an incision complex.

It localises to the cytoplasm. The UvrABC repair system catalyzes the recognition and processing of DNA lesions. UvrC both incises the 5' and 3' sides of the lesion. The N-terminal half is responsible for the 3' incision and the C-terminal half is responsible for the 5' incision. The protein is UvrABC system protein C of Zymomonas mobilis subsp. mobilis (strain ATCC 31821 / ZM4 / CP4).